The chain runs to 234 residues: DNA repair protein RecO (234 aa).

This sequence belongs to the RecO family.

Involved in DNA repair and RecF pathway recombination. The protein is DNA repair protein RecO of Halorhodospira halophila (strain DSM 244 / SL1) (Ectothiorhodospira halophila (strain DSM 244 / SL1)).